The following is a 469-amino-acid chain: Keratin, type I cytoskeletal 26 (469 aa).

Residues 1–82 (MSFRLSSGSR…ENEHGLLPGN (82 aa)) are head. The interval 83 to 118 (EKVTLQNLNDRLASYLDHVCTLEEANADLEQKIKGW) is coil 1A. One can recognise an IF rod domain in the interval 83–398 (EKVTLQNLND…KLIDGEGRKS (316 aa)). The tract at residues 119–140 (YEKYGPGSGRQLAYDCSKYFSV) is linker 1. The interval 141-232 (TEDLKRQIIS…KNHQEEMKVM (92 aa)) is coil 1B. A linker 12 region spans residues 233–255 (QGAAGGNVNVEINAAPGVDLTVL). The segment at 256 to 394 (LNNMRAEYED…EMYCKLIDGE (139 aa)) is coil 2. Residues 395 to 465 (GRKSKSTYCK…NITMEQRLPS (71 aa)) form a tail region. Disordered regions lie at residues 398–421 (SKSTYCKSEGRGPKNSENQVKDSK) and 450–469 (KSSKISNITMEQRLPSKVPQ). Positions 405–421 (SEGRGPKNSENQVKDSK) are enriched in basic and acidic residues.

The protein belongs to the intermediate filament family. As to quaternary structure, heterotetramer of two type I and two type II keratins.

This chain is Keratin, type I cytoskeletal 26, found in Bos taurus (Bovine).